We begin with the raw amino-acid sequence, 200 residues long: MTLPEKLLKITPKILVIMGSVRSKRLCPTIATWVGEMGKRETNFDYEKVDLTDWPLSMSDEPGLPIMGIDVYTQEHTKAWGSKIAGADGFVFVTPQYNGGYPAILKNALDHLYHEWNGKPLLIVSYGGHGGGDCASQLKHVAGFLKMRVAPTMPALTLPRDKIVQGVVDPAVEFTKHLGELKKAFGEFSQLFESNPERKP.

Residues R22, 96–99, and Y126 each bind FMN; that span reads QYNG.

Homodimer.

The protein resides in the cytoplasm. It localises to the nucleus. It catalyses the reaction FMNH2 + NADP(+) = FMN + NADPH + 2 H(+). The catalysed reaction is FMNH2 + NAD(+) = FMN + NADH + 2 H(+). Has several reductase activities that are NAD(P)H-dependent and involve FMN as a cofactor. May be involved in ferric iron assimilation. The chain is NAD(P)H-dependent FMN reductase C4B3.06c from Schizosaccharomyces pombe (strain 972 / ATCC 24843) (Fission yeast).